The sequence spans 255 residues: Ribosomal RNA small subunit methyltransferase G (255 aa).

The disordered stretch occupies residues 1–44 (MSSPGRPKGEYRSAQHAGAVAGPPGRPDGEHRGSSGADPNGRLR). Residues glycine 118, leucine 123, 169-170 (VE), and arginine 183 contribute to the S-adenosyl-L-methionine site.

It belongs to the methyltransferase superfamily. RNA methyltransferase RsmG family.

The protein localises to the cytoplasm. The catalysed reaction is guanosine(527) in 16S rRNA + S-adenosyl-L-methionine = N(7)-methylguanosine(527) in 16S rRNA + S-adenosyl-L-homocysteine. Functionally, specifically methylates the N7 position of guanine in position 527 of 16S rRNA. This Bordetella petrii (strain ATCC BAA-461 / DSM 12804 / CCUG 43448) protein is Ribosomal RNA small subunit methyltransferase G.